The following is a 425-amino-acid chain: Serine--tRNA ligase (425 aa).

An L-serine-binding site is contributed by 233–235; sequence TAE. 264–266 is a binding site for ATP; sequence RRE. Residue glutamate 287 coordinates L-serine. Residue 351-354 participates in ATP binding; the sequence is EISS. Residue serine 385 participates in L-serine binding.

The protein belongs to the class-II aminoacyl-tRNA synthetase family. Type-1 seryl-tRNA synthetase subfamily. As to quaternary structure, homodimer. The tRNA molecule binds across the dimer.

It localises to the cytoplasm. The catalysed reaction is tRNA(Ser) + L-serine + ATP = L-seryl-tRNA(Ser) + AMP + diphosphate + H(+). It catalyses the reaction tRNA(Sec) + L-serine + ATP = L-seryl-tRNA(Sec) + AMP + diphosphate + H(+). The protein operates within aminoacyl-tRNA biosynthesis; selenocysteinyl-tRNA(Sec) biosynthesis; L-seryl-tRNA(Sec) from L-serine and tRNA(Sec): step 1/1. Functionally, catalyzes the attachment of serine to tRNA(Ser). Is also able to aminoacylate tRNA(Sec) with serine, to form the misacylated tRNA L-seryl-tRNA(Sec), which will be further converted into selenocysteinyl-tRNA(Sec). In Synechococcus sp. (strain WH7803), this protein is Serine--tRNA ligase.